The sequence spans 248 residues: Pyridoxine 5'-phosphate synthase (248 aa).

Residue Asn12 participates in 3-amino-2-oxopropyl phosphate binding. 14-15 (DH) contributes to the 1-deoxy-D-xylulose 5-phosphate binding site. Residue Arg23 participates in 3-amino-2-oxopropyl phosphate binding. The Proton acceptor role is filled by His48. Residues Arg50 and His55 each contribute to the 1-deoxy-D-xylulose 5-phosphate site. The Proton acceptor role is filled by Glu75. Position 105 (Thr105) interacts with 1-deoxy-D-xylulose 5-phosphate. Catalysis depends on His196, which acts as the Proton donor. 3-amino-2-oxopropyl phosphate-binding positions include Gly197 and 218-219 (GH).

It belongs to the PNP synthase family. Homooctamer; tetramer of dimers.

It is found in the cytoplasm. The catalysed reaction is 3-amino-2-oxopropyl phosphate + 1-deoxy-D-xylulose 5-phosphate = pyridoxine 5'-phosphate + phosphate + 2 H2O + H(+). It participates in cofactor biosynthesis; pyridoxine 5'-phosphate biosynthesis; pyridoxine 5'-phosphate from D-erythrose 4-phosphate: step 5/5. Its function is as follows. Catalyzes the complicated ring closure reaction between the two acyclic compounds 1-deoxy-D-xylulose-5-phosphate (DXP) and 3-amino-2-oxopropyl phosphate (1-amino-acetone-3-phosphate or AAP) to form pyridoxine 5'-phosphate (PNP) and inorganic phosphate. In Ectopseudomonas mendocina (strain ymp) (Pseudomonas mendocina), this protein is Pyridoxine 5'-phosphate synthase.